Consider the following 85-residue polypeptide: N.vectensis toxin 6 (85 aa).

A signal peptide spans 1 to 20 (MISFKTVIVCLFLWVVIIGA). Cystine bridges form between Cys46-Cys82, Cys48-Cys71, and Cys64-Cys83.

In terms of biological role, probable toxin. The chain is N.vectensis toxin 6 from Nematostella vectensis (Starlet sea anemone).